The primary structure comprises 380 residues: Chaperone protein DnaJ (380 aa).

Positions 5-70 (DYYEILGVTK…QKRAAYDRFG (66 aa)) constitute a J domain. The segment at 137-215 (GKAETIKIPT…CQGAGRVNRE (79 aa)) adopts a CR-type zinc-finger fold. Cys-150, Cys-153, Cys-167, Cys-170, Cys-189, Cys-192, Cys-203, and Cys-206 together coordinate Zn(2+). CXXCXGXG motif repeat units lie at residues 150-157 (CEVCDGSG), 167-174 (CPTCAGYG), 189-196 (CPNCHGRG), and 203-210 (CTACQGAG).

It belongs to the DnaJ family. In terms of assembly, homodimer. Zn(2+) serves as cofactor.

The protein resides in the cytoplasm. Its function is as follows. Participates actively in the response to hyperosmotic and heat shock by preventing the aggregation of stress-denatured proteins and by disaggregating proteins, also in an autonomous, DnaK-independent fashion. Unfolded proteins bind initially to DnaJ; upon interaction with the DnaJ-bound protein, DnaK hydrolyzes its bound ATP, resulting in the formation of a stable complex. GrpE releases ADP from DnaK; ATP binding to DnaK triggers the release of the substrate protein, thus completing the reaction cycle. Several rounds of ATP-dependent interactions between DnaJ, DnaK and GrpE are required for fully efficient folding. Also involved, together with DnaK and GrpE, in the DNA replication of plasmids through activation of initiation proteins. This Methylobacterium radiotolerans (strain ATCC 27329 / DSM 1819 / JCM 2831 / NBRC 15690 / NCIMB 10815 / 0-1) protein is Chaperone protein DnaJ.